The primary structure comprises 1046 residues: Arrestin-related trafficking adapter 3 (1046 aa).

A disordered region spans residues 115–141 (YPPTEQKSKKKMDASAPNESNNAANNF). The span at 128–140 (ASAPNESNNAANN) shows a compositional bias: low complexity. Ser-155 and Ser-162 each carry phosphoserine. 2 stretches are compositionally biased toward low complexity: residues 168–179 (SGLSSLNLSPLG) and 198–210 (RSSS…GPSR). The disordered stretch occupies residues 168–230 (SGLSSLNLSP…ATSPSVSHHN (63 aa)). Phosphoserine is present on residues Ser-213 and Ser-586. Positions 605–614 (TRNSRQFNRN) are enriched in polar residues. 2 disordered regions span residues 605 to 627 (TRNS…IFNS) and 651 to 820 (PLSP…FAHS). Positions 669–694 (FDFSSDFISDAASGTTTTEVSSSESS) are enriched in low complexity. A compositionally biased stretch (basic and acidic residues) spans 734 to 785 (KNSDKNSSETLNKKESMSKIEENKHKRETTPKKRENRDVKSLSTPQREESKD). A compositionally biased stretch (low complexity) spans 802 to 811 (LSLSSSLHSS). Ser-826 and Ser-838 each carry phosphoserine. Residues 868–889 (NHDKNELNRHSTNTSSTPASAR) form a disordered region. A compositionally biased stretch (polar residues) spans 877-889 (HSTNTSSTPASAR). Residue Ser-900 is modified to Phosphoserine. The disordered stretch occupies residues 986–1017 (QNSAESDHNNDIFTQGSGLTESSKNSDSEERF). The span at 996–1008 (DIFTQGSGLTESS) shows a compositional bias: polar residues. 2 positions are modified to phosphoserine: Ser-1022 and Ser-1023.

This sequence belongs to the ALY1 family. In terms of assembly, interacts with PCL6, PCL7 and RSP5. In terms of processing, ubiquitinated by RSP5. Phosphorylated by the cyclin-CDKs PCL6-PHO85 and PCL7-PHO85.

It localises to the cytoplasm. May regulate endocytosis by recruiting RSP5 ubiquitin ligase activity to specific plasma membrane proteins in response to extracellular stimuli. The chain is Arrestin-related trafficking adapter 3 (ALY2) from Saccharomyces cerevisiae (strain ATCC 204508 / S288c) (Baker's yeast).